We begin with the raw amino-acid sequence, 352 residues long: N-terminal EF-hand calcium-binding protein 1 (352 aa).

A Phosphoserine modification is found at Ser-4. EF-hand domains lie at 26–61 (KGMS…GVLS) and 60–95 (LSGE…HLGE). Residues Asp-39, Asn-41, Asp-43, Lys-45, and Glu-50 each contribute to the Ca(2+) site. A coiled-coil region spans residues 135 to 163 (LLKETLNQLQSLQNSLECAMETTEEQTRQ). The interval 155–202 (ETTEEQTRQERQGPSKPEVLSIQWPGKRSSRRVQRHNSFSPNSPQFNV) is disordered. The segment covering 190–202 (HNSFSPNSPQFNV) has biased composition (polar residues). Residues Ser-192 and Ser-197 each carry the phosphoserine modification. The stretch at 209–275 (EEDNQWMTQI…EEFQLALKHY (67 aa)) forms a coiled coil. An ABM domain is found at 252–340 (MLVQRQMSVT…LETPELTSTM (89 aa)).

As to quaternary structure, interacts with STX1. May interact with CPNE6.

It localises to the cytoplasm. The sequence is that of N-terminal EF-hand calcium-binding protein 1 (Necab1) from Rattus norvegicus (Rat).